The primary structure comprises 172 residues: Transmembrane protein 91 (172 aa).

Disordered regions lie at residues 1–31 and 55–83; these read MDSP…RHEL and PSVS…DWDG. Residues 1–97 lie on the Extracellular side of the membrane; it reads MDSPSLRELQ…SPFLPHDHLG (97 aa). Over residues 69-81 the composition is skewed to acidic residues; that stretch reads VEDMSSSDSDSDW. The chain crosses the membrane as a helical span at residues 98 to 118; the sequence is LAVFSMLCCFWPVGIAAFCLA. Residues 119–139 are Cytoplasmic-facing; it reads QKTNKAWAKGDIQGAGAASRR. Residues 140–160 traverse the membrane as a helical segment; the sequence is AFLLGVLAVGLGVCTYAAALV. Residues 161 to 172 lie on the Extracellular side of the membrane; that stretch reads TLAAYLASRDPP.

Belongs to the CD225/Dispanin family.

It is found in the membrane. The polypeptide is Transmembrane protein 91 (TMEM91) (Homo sapiens (Human)).